The chain runs to 369 residues: Phenylalanine--tRNA ligase alpha subunit (369 aa).

Glu-272 lines the Mg(2+) pocket.

It belongs to the class-II aminoacyl-tRNA synthetase family. Phe-tRNA synthetase alpha subunit type 1 subfamily. In terms of assembly, tetramer of two alpha and two beta subunits. Mg(2+) serves as cofactor.

It localises to the cytoplasm. It carries out the reaction tRNA(Phe) + L-phenylalanine + ATP = L-phenylalanyl-tRNA(Phe) + AMP + diphosphate + H(+). The chain is Phenylalanine--tRNA ligase alpha subunit from Cutibacterium acnes (strain DSM 16379 / KPA171202) (Propionibacterium acnes).